We begin with the raw amino-acid sequence, 604 residues long: Sulfite reductase [NADPH] flavoprotein alpha-component (604 aa).

The Flavodoxin-like domain maps to valine 66 to alanine 204. FMN is bound by residues serine 72–alanine 77, serine 119–glycine 122, and leucine 155–cysteine 164. Residues alanine 239 to proline 453 enclose the FAD-binding FR-type domain. FAD contacts are provided by residues threonine 327, glutamine 361, arginine 391–serine 394, threonine 409–glycine 411, and glycine 424–serine 427. Residues serine 524–arginine 525, lysine 530–glutamine 534, and aspartate 566 contribute to the NADP(+) site. Tyrosine 604 provides a ligand contact to FAD.

It belongs to the NADPH-dependent sulphite reductase flavoprotein subunit CysJ family. The protein in the N-terminal section; belongs to the flavodoxin family. This sequence in the C-terminal section; belongs to the flavoprotein pyridine nucleotide cytochrome reductase family. Alpha(8)-beta(8). The alpha component is a flavoprotein, the beta component is a hemoprotein. FAD is required as a cofactor. The cofactor is FMN.

It catalyses the reaction hydrogen sulfide + 3 NADP(+) + 3 H2O = sulfite + 3 NADPH + 4 H(+). The protein operates within sulfur metabolism; hydrogen sulfide biosynthesis; hydrogen sulfide from sulfite (NADPH route): step 1/1. In terms of biological role, component of the sulfite reductase complex that catalyzes the 6-electron reduction of sulfite to sulfide. This is one of several activities required for the biosynthesis of L-cysteine from sulfate. The flavoprotein component catalyzes the electron flow from NADPH -&gt; FAD -&gt; FMN to the hemoprotein component. This Neisseria meningitidis serogroup A / serotype 4A (strain DSM 15465 / Z2491) protein is Sulfite reductase [NADPH] flavoprotein alpha-component.